Consider the following 283-residue polypeptide: Pantothenate synthetase (283 aa).

30-37 lines the ATP pocket; that stretch reads MGNLHDGH. His-37 serves as the catalytic Proton donor. Residue Gln-61 participates in (R)-pantoate binding. Beta-alanine is bound at residue Gln-61. 149-152 lines the ATP pocket; sequence GEKD. Residue Gln-155 participates in (R)-pantoate binding. 186–189 lines the ATP pocket; it reads LSSR.

This sequence belongs to the pantothenate synthetase family. Homodimer.

The protein localises to the cytoplasm. It carries out the reaction (R)-pantoate + beta-alanine + ATP = (R)-pantothenate + AMP + diphosphate + H(+). Its pathway is cofactor biosynthesis; (R)-pantothenate biosynthesis; (R)-pantothenate from (R)-pantoate and beta-alanine: step 1/1. Functionally, catalyzes the condensation of pantoate with beta-alanine in an ATP-dependent reaction via a pantoyl-adenylate intermediate. This chain is Pantothenate synthetase, found in Shigella sonnei (strain Ss046).